The chain runs to 217 residues: Peroxiredoxin Q, chloroplastic (217 aa).

Residues 1-66 (MAFAASTACC…RRRAASTGIV (66 aa)) constitute a chloroplast transit peptide. The Thioredoxin domain maps to 70 to 217 (VSKGSVPPNF…GETLKIIQNL (148 aa)). The Cysteine sulfenic acid (-SOH) intermediate role is filled by Cys112. Residues Cys112 and Cys117 are joined by a disulfide bond.

The protein belongs to the peroxiredoxin family. BCP/PrxQ subfamily. Monomer.

The protein resides in the plastid. Its subcellular location is the chloroplast thylakoid lumen. The enzyme catalyses a hydroperoxide + [thioredoxin]-dithiol = an alcohol + [thioredoxin]-disulfide + H2O. Functionally, thiol-specific peroxidase that catalyzes the reduction of hydrogen peroxide and organic hydroperoxides to water and alcohols, respectively. Plays a role in cell protection against oxidative stress by detoxifying peroxides. The protein is Peroxiredoxin Q, chloroplastic (PRX1) of Triticum aestivum (Wheat).